The chain runs to 290 residues: ATP synthase gamma chain (290 aa).

The protein belongs to the ATPase gamma chain family. In terms of assembly, F-type ATPases have 2 components, CF(1) - the catalytic core - and CF(0) - the membrane proton channel. CF(1) has five subunits: alpha(3), beta(3), gamma(1), delta(1), epsilon(1). CF(0) has three main subunits: a, b and c.

The protein localises to the cell inner membrane. Its function is as follows. Produces ATP from ADP in the presence of a proton gradient across the membrane. The gamma chain is believed to be important in regulating ATPase activity and the flow of protons through the CF(0) complex. The polypeptide is ATP synthase gamma chain (Bradyrhizobium diazoefficiens (strain JCM 10833 / BCRC 13528 / IAM 13628 / NBRC 14792 / USDA 110)).